Reading from the N-terminus, the 330-residue chain is Aspartate--ammonia ligase (330 aa).

This sequence belongs to the class-II aminoacyl-tRNA synthetase family. AsnA subfamily.

It is found in the cytoplasm. The catalysed reaction is L-aspartate + NH4(+) + ATP = L-asparagine + AMP + diphosphate + H(+). It functions in the pathway amino-acid biosynthesis; L-asparagine biosynthesis; L-asparagine from L-aspartate (ammonia route): step 1/1. This chain is Aspartate--ammonia ligase, found in Yersinia pseudotuberculosis serotype O:1b (strain IP 31758).